A 498-amino-acid chain; its full sequence is Probable malate:quinone oxidoreductase (498 aa).

This sequence belongs to the MQO family. The cofactor is FAD.

The catalysed reaction is (S)-malate + a quinone = a quinol + oxaloacetate. Its pathway is carbohydrate metabolism; tricarboxylic acid cycle; oxaloacetate from (S)-malate (quinone route): step 1/1. The sequence is that of Probable malate:quinone oxidoreductase from Granulibacter bethesdensis (strain ATCC BAA-1260 / CGDNIH1).